We begin with the raw amino-acid sequence, 367 residues long: tRNA-specific 2-thiouridylase MnmA (367 aa).

ATP is bound by residues 7 to 14 and Met33; that span reads AMSGGVDS. The active-site Nucleophile is the Cys108. Cys108 and Cys200 are oxidised to a cystine. Gly132 provides a ligand contact to ATP. The tract at residues 150–152 is interaction with tRNA; it reads KDQ. The active-site Cysteine persulfide intermediate is the Cys200. Positions 301-302 are interaction with tRNA; the sequence is RY.

This sequence belongs to the MnmA/TRMU family.

The protein localises to the cytoplasm. The enzyme catalyses S-sulfanyl-L-cysteinyl-[protein] + uridine(34) in tRNA + AH2 + ATP = 2-thiouridine(34) in tRNA + L-cysteinyl-[protein] + A + AMP + diphosphate + H(+). Its function is as follows. Catalyzes the 2-thiolation of uridine at the wobble position (U34) of tRNA, leading to the formation of s(2)U34. The protein is tRNA-specific 2-thiouridylase MnmA of Thermus thermophilus (strain ATCC BAA-163 / DSM 7039 / HB27).